The chain runs to 290 residues: Probable endonuclease 4 (290 aa).

9 residues coordinate Zn(2+): histidine 66, histidine 106, glutamate 143, aspartate 179, histidine 182, histidine 216, aspartate 229, histidine 231, and glutamate 261.

Belongs to the AP endonuclease 2 family. Zn(2+) is required as a cofactor.

It carries out the reaction Endonucleolytic cleavage to 5'-phosphooligonucleotide end-products.. Endonuclease IV plays a role in DNA repair. It cleaves phosphodiester bonds at apurinic or apyrimidinic (AP) sites, generating a 3'-hydroxyl group and a 5'-terminal sugar phosphate. This Solibacter usitatus (strain Ellin6076) protein is Probable endonuclease 4.